The sequence spans 363 residues: 3-isopropylmalate dehydrogenase (363 aa).

78–91 (GPKWENLPPESQPE) provides a ligand contact to NAD(+). Positions 99, 109, 138, and 227 each coordinate substrate. Residues Asp-227, Asp-251, and Asp-255 each coordinate Mg(2+). Residue 285 to 297 (GSAPDIAGKNIAN) coordinates NAD(+).

This sequence belongs to the isocitrate and isopropylmalate dehydrogenases family. LeuB type 1 subfamily. As to quaternary structure, homodimer. Requires Mg(2+) as cofactor. Mn(2+) serves as cofactor.

Its subcellular location is the cytoplasm. The enzyme catalyses (2R,3S)-3-isopropylmalate + NAD(+) = 4-methyl-2-oxopentanoate + CO2 + NADH. Its pathway is amino-acid biosynthesis; L-leucine biosynthesis; L-leucine from 3-methyl-2-oxobutanoate: step 3/4. Its function is as follows. Catalyzes the oxidation of 3-carboxy-2-hydroxy-4-methylpentanoate (3-isopropylmalate) to 3-carboxy-4-methyl-2-oxopentanoate. The product decarboxylates to 4-methyl-2 oxopentanoate. The chain is 3-isopropylmalate dehydrogenase from Salmonella choleraesuis (strain SC-B67).